The following is a 77-amino-acid chain: DNA-directed RNA polymerase subunit epsilon (77 aa).

It belongs to the RNA polymerase subunit epsilon family. As to quaternary structure, RNAP is composed of a core of 2 alpha, a beta and a beta' subunit. The core is associated with a delta subunit, and at least one of epsilon or omega. When a sigma factor is associated with the core the holoenzyme is formed, which can initiate transcription.

The enzyme catalyses RNA(n) + a ribonucleoside 5'-triphosphate = RNA(n+1) + diphosphate. Its function is as follows. A non-essential component of RNA polymerase (RNAP). The polypeptide is DNA-directed RNA polymerase subunit epsilon (Streptococcus pneumoniae serotype 2 (strain D39 / NCTC 7466)).